The sequence spans 305 residues: HTH-type transcriptional regulator KdgR (305 aa).

The HTH iclR-type domain occupies 55 to 116 (VSSVLKVFGI…GESEKYSLTL (62 aa)). The H-T-H motif DNA-binding region spans 76–95 (ITELSQRVMMSKSTVYRFLQ). Residues 131-300 (LIRSADIQMR…ARNISDQMGY (170 aa)) enclose the IclR-ED domain.

As to quaternary structure, homodimer.

The protein resides in the cytoplasm. Transcriptional repressor that negatively regulates the expression of genes involved in pectinolysis and in pectinase secretion. Controls genes involved in pectin catabolism, including the pectinase genes (pelA, pelB, pelC, pelE), genes involved in pectin catabolism (kdgT, ogl, kduI-kdgF) and the outT gene involved in pectinase secretion. Acts by binding directly to KdgR binding sites (KdgR-box) in the gene operator/promoter region. In Dickeya chrysanthemi (Pectobacterium chrysanthemi), this protein is HTH-type transcriptional regulator KdgR.